The chain runs to 461 residues: O-methyltransferase CTB2 (461 aa).

Aspartate 288 is a binding site for S-adenosyl-L-methionine. Residue histidine 339 is the Proton acceptor of the active site.

The protein belongs to the class I-like SAM-binding methyltransferase superfamily. Cation-independent O-methyltransferase family. COMT subfamily.

The protein operates within mycotoxin biosynthesis. O-methyltransferase; part of the gene cluster that mediates the biosynthesis of cercosporin, a light-activated, non-host-selective toxin. The perylenequinone chromophore of cercosporin absorbs light energy to attain an electronically-activated triplet state and produces active oxygen species such as the hydroxyl radical, superoxide, hydrogen peroxide or singlet oxygen upon reaction with oxygen molecules. These reactive oxygen species cause damage to various cellular components including lipids, proteins and nucleic acids. The first step of cercosporin biosynthesis is performed by the polyketide synthase CTB1 which catalyzes the formation of nor-toralactone. The starter unit acyltransferase (SAT) domain of CTB1 initiates polyketide extension by the selective utilization of acetyl-CoA, which is elongated to the heptaketide in the beta-ketoacyl synthase (KS) domain by successive condensations with six malonyl units introduced by the malonyl acyltransferase (MAT) domain. The product template (PT) domain catalyzes C4-C9 and C2-C11 aldol cyclizations and dehydrations to a trihydroxynaphthalene, which is thought to be delivered to the thioesterase (TE) domain for product release. The bifunctional enzyme CTB3 then methylates nor-toralactone to toralactone before conducting an unusual oxidative aromatic ring opening. The O-methyltransferase CTB2 further methylates the nascent OH-6 of the CBT3 product, blocking further oxidation at this site before the reductase CTB6 reduces the 2-oxopropyl ketone at position C7, giving naphthalene. The FAD-dependent monooxygenase CTB5 in concert with the multicopper oxidase CTB12 are responsible for homodimerization of naphthalene with CTB7 installing the dioxepine moiety, finally producing cercosporin. The fasciclin domain-containing protein CTB11 might act with CTB5 and CTB12 whereas the roles of CTB9 and CTB10 have still to be elucidated. The protein is O-methyltransferase CTB2 of Cercospora nicotianae (Barn spot disease fungus).